A 358-amino-acid polypeptide reads, in one-letter code: Phospho-N-acetylmuramoyl-pentapeptide-transferase (358 aa).

Transmembrane regions (helical) follow at residues 3 to 23, 54 to 74, 84 to 104, 114 to 134, 156 to 176, 187 to 207, 231 to 251, 255 to 275, 283 to 303, and 330 to 350; these read QILFAAAIALTVSILLTPALI, GVAILIGMWAGYLGSHLIGIA, ALLVLGLATALGAVGFIDDFI, LTAAGKYLGQLTAAIVFGVLA, ITTVSMGVIVFLAFVSLVVVA, LDGLAAGSMSLVLGGYVIITF, LALVCAAGTAACIGFLWWNAA, IFMGDTGSLALGGLLAGLSIT, VVIGALFVAEAASVVLQVAVF, and VIIRFWLLAAMASAFGLGLFY.

The protein belongs to the glycosyltransferase 4 family. MraY subfamily. Requires Mg(2+) as cofactor.

The protein resides in the cell membrane. It carries out the reaction UDP-N-acetyl-alpha-D-muramoyl-L-alanyl-gamma-D-glutamyl-meso-2,6-diaminopimeloyl-D-alanyl-D-alanine + di-trans,octa-cis-undecaprenyl phosphate = di-trans,octa-cis-undecaprenyl diphospho-N-acetyl-alpha-D-muramoyl-L-alanyl-D-glutamyl-meso-2,6-diaminopimeloyl-D-alanyl-D-alanine + UMP. It functions in the pathway cell wall biogenesis; peptidoglycan biosynthesis. In terms of biological role, catalyzes the initial step of the lipid cycle reactions in the biosynthesis of the cell wall peptidoglycan: transfers peptidoglycan precursor phospho-MurNAc-pentapeptide from UDP-MurNAc-pentapeptide onto the lipid carrier undecaprenyl phosphate, yielding undecaprenyl-pyrophosphoryl-MurNAc-pentapeptide, known as lipid I. The polypeptide is Phospho-N-acetylmuramoyl-pentapeptide-transferase (Nocardia farcinica (strain IFM 10152)).